A 161-amino-acid chain; its full sequence is Arachidonate 5-lipoxygenase-activating protein (161 aa).

The Lumenal segment spans residues M1–N8. Residues I9–V30 traverse the membrane as a helical segment. Over E31 to R52 the chain is Cytoplasmic. A helical transmembrane segment spans residues V53–L77. Residues C78–Q80 lie on the Lumenal side of the membrane. A helical membrane pass occupies residues V81–L102. The Cytoplasmic segment spans residues G103 to Q107. Residues S108–G115 lie within the membrane without spanning it. Residues K116 to A128 form a helical membrane-spanning segment. The Lumenal segment spans residues G129–P161.

Belongs to the MAPEG family. Homotrimer. Interacts with LTC4S and ALOX5.

Its subcellular location is the nucleus membrane. The protein localises to the endoplasmic reticulum membrane. Its function is as follows. Required for leukotriene biosynthesis by ALOX5 (5-lipoxygenase). Anchors ALOX5 to the membrane. Binds arachidonic acid, and could play an essential role in the transfer of arachidonic acid to ALOX5. Binds to MK-886, a compound that blocks the biosynthesis of leukotrienes. The protein is Arachidonate 5-lipoxygenase-activating protein (ALOX5AP) of Bos taurus (Bovine).